We begin with the raw amino-acid sequence, 171 residues long: 6,7-dimethyl-8-ribityllumazine synthase (171 aa).

5-amino-6-(D-ribitylamino)uracil-binding positions include Phe-30, 64-66 (ALE), and 88-90 (AVI). (2S)-2-hydroxy-3-oxobutyl phosphate is bound at residue 93-94 (ET). Residue His-96 is the Proton donor of the active site. Asn-121 provides a ligand contact to 5-amino-6-(D-ribitylamino)uracil. Arg-135 lines the (2S)-2-hydroxy-3-oxobutyl phosphate pocket.

Belongs to the DMRL synthase family.

The catalysed reaction is (2S)-2-hydroxy-3-oxobutyl phosphate + 5-amino-6-(D-ribitylamino)uracil = 6,7-dimethyl-8-(1-D-ribityl)lumazine + phosphate + 2 H2O + H(+). Its pathway is cofactor biosynthesis; riboflavin biosynthesis; riboflavin from 2-hydroxy-3-oxobutyl phosphate and 5-amino-6-(D-ribitylamino)uracil: step 1/2. Catalyzes the formation of 6,7-dimethyl-8-ribityllumazine by condensation of 5-amino-6-(D-ribitylamino)uracil with 3,4-dihydroxy-2-butanone 4-phosphate. This is the penultimate step in the biosynthesis of riboflavin. This chain is 6,7-dimethyl-8-ribityllumazine synthase, found in Polynucleobacter necessarius subsp. necessarius (strain STIR1).